We begin with the raw amino-acid sequence, 218 residues long: Probable 1-Cys peroxiredoxin (218 aa).

The Thioredoxin domain occupies 5-166 (WALGDLVPDI…VLRVLDSLQL (162 aa)). Cysteine 47 functions as the Cysteine sulfenic acid (-SOH) intermediate in the catalytic mechanism.

The protein belongs to the peroxiredoxin family. Prx6 subfamily.

It is found in the nucleus. Its subcellular location is the cytoplasm. The catalysed reaction is a hydroperoxide + [thioredoxin]-dithiol = an alcohol + [thioredoxin]-disulfide + H2O. Its function is as follows. Thiol-specific peroxidase that catalyzes the reduction of hydrogen peroxide and organic hydroperoxides to water and alcohols, respectively. Seems to contribute to the inhibition of germination during stress. Associated with the rehydration events involved in the recovery of the desiccation-tolerant moss. This chain is Probable 1-Cys peroxiredoxin, found in Syntrichia ruralis (Great hairy screw-moss).